We begin with the raw amino-acid sequence, 72 residues long: Translation initiation factor IF-1 (72 aa).

The S1-like domain occupies 1 to 72 (MAKDDVIEID…DKGRITYRYK (72 aa)).

The protein belongs to the IF-1 family. As to quaternary structure, component of the 30S ribosomal translation pre-initiation complex which assembles on the 30S ribosome in the order IF-2 and IF-3, IF-1 and N-formylmethionyl-tRNA(fMet); mRNA recruitment can occur at any time during PIC assembly.

It is found in the cytoplasm. Its function is as follows. One of the essential components for the initiation of protein synthesis. Stabilizes the binding of IF-2 and IF-3 on the 30S subunit to which N-formylmethionyl-tRNA(fMet) subsequently binds. Helps modulate mRNA selection, yielding the 30S pre-initiation complex (PIC). Upon addition of the 50S ribosomal subunit IF-1, IF-2 and IF-3 are released leaving the mature 70S translation initiation complex. The protein is Translation initiation factor IF-1 of Campylobacter curvus (strain 525.92).